Reading from the N-terminus, the 126-residue chain is Putative phosphotransferase enzyme IIB component UU178 (126 aa).

The chain crosses the membrane as a helical span at residues 11-31 (LIIFLGIITFGIFIIYFFTKA). Residues 49–126 (PFSLNDFYNC…KELIKKDLFS (78 aa)) enclose the PTS EIIB type-1 domain.

This sequence to M.genitalium MG129 and M.pneumoniae MPN268.

The protein resides in the membrane. Functionally, the phosphoenolpyruvate-dependent sugar phosphotransferase system (PTS), a major carbohydrate active -transport system, catalyzes the phosphorylation of incoming sugar substrates concomitant with their translocation across the cell membrane. The protein is Putative phosphotransferase enzyme IIB component UU178 of Ureaplasma parvum serovar 3 (strain ATCC 700970).